We begin with the raw amino-acid sequence, 157 residues long: Homeobox protein DBX2 (157 aa).

The homeobox DNA-binding region spans 9-68 (GILRRAVFSEDQRKALEKMFQKQKYISKTDRKKLAINLGLKESQVKIWFQNRRMKWRNSK). A disordered region spans residues 105–157 (SQEQTSPRWKEKSPGNSERLTSTQPPPRANSSQSPLYLYPDHDTANKAVTSSD). Over residues 118-139 (PGNSERLTSTQPPPRANSSQSP) the composition is skewed to polar residues.

Belongs to the H2.0 homeobox family. Localized to the central nervous system during embryogenesis. It is found restricted to the rostro-caudal and dorso-ventral regions of the hindbrain. In the ventricular zone of the spinal cord, it localizes to the dorsal part of the basal plate. In the adult, it is detected in ovary.

Its subcellular location is the nucleus. Its function is as follows. Appears to perform a very early function in establishing the identity of a subset of cells that originate in the region of the ventricular zone in the developing spinal cord and in the hindbrain. This is Homeobox protein DBX2 (DBX2) from Gallus gallus (Chicken).